A 728-amino-acid polypeptide reads, in one-letter code: MNKGWLELESDPGLFTLLVEDFGVKGVQVEEIYDLQSKCQGPVYGFIFLFKWIEERRSRRKVSTLVDDTSVIDDDIVNNMFFAHQLIPNSCATHALLSVLLNCSNVDLGPTLSRMKDFTKGFSPESKGYAIGNAPELAKAHNSHARPEPRHLPEKQNGLSAVRTMEAFHFVSYVPITGRLFELDGLKVYPIDHGPWGEDEEWTDKARRVIMERIGLATAGEPYHDIRFNLMAVVPDRRIKYETRLHVLKVNRQTVLEALQQLIRVTQPELIQTHKSQESQLPEESKPASSKSPLGLEAGRTPVASECTQTDGAEEVAGSCPQTTTHSPPSKCKLVVKPPGSSLNGVPPNPAPIVQRLPAFLDNHNYAKSPMQEEEDLAAGVGRSRVPVRAPQQYSEDEDDYEDEDEDVQNTNPAIRYKRKGTGKPGSLSNSSDGQLSVLQPNTINVLTEKLQESQKDLSVPLSIKTSSGAGSPAVAVPTHSQPSPTPSNESTDTASEIGSAFNSPLRSPIRSANPTRPSSPVTSHISKVLFGEDDSLLRVDCIRYNRAVRDLGPVISTGLLHLAEDGVLSPLALTEGGKGSSPSTRSSQGSQGSSGLEEKEVVEVTESRDKPGLNRSSEPLSGEKYSPKELLALLKCVEAEIANYEACLKEEVEKRKKFKIDDQRRTHNYDEFICTFISMLAQEGMLANLVEQNISVRRRQGVSIGRLHKQRKPDRRKRSRPYKAKRQ.

One can recognise a UCH catalytic domain in the interval 4-235; the sequence is GWLELESDPG…IRFNLMAVVP (232 aa). Residues 56-60 carry the Arg-finger motif motif; sequence RRSRR. Cys-91 functions as the Nucleophile in the catalytic mechanism. His-169 functions as the Proton donor in the catalytic mechanism. The tract at residues 273-333 is disordered; it reads THKSQESQLP…TTHSPPSKCK (61 aa). A Phosphoserine modification is found at Ser-292. An HBM-like motif motif is present at residues 363–366; sequence NHNY. Residues Ser-369 and Ser-395 each carry the phosphoserine modification. Disordered stretches follow at residues 372–436 and 463–523; these read QEEE…DGQL and SIKT…SPVT. A compositionally biased stretch (acidic residues) spans 395–408; sequence SEDEDDYEDEDEDV. Composition is skewed to polar residues over residues 427–436 and 479–523; these read SLSNSSDGQL and THSQ…SPVT. Position 492 is a phosphothreonine (Thr-492). Phosphoserine is present on residues Ser-520, Ser-536, and Ser-584. Residues 574 to 623 form a disordered region; the sequence is LTEGGKGSSPSTRSSQGSQGSSGLEEKEVVEVTESRDKPGLNRSSEPLSG. Over residues 581-596 the composition is skewed to low complexity; the sequence is SSPSTRSSQGSQGSSG. The interval 595–720 is interaction with BRCA1; that stretch reads SGLEEKEVVE…QRKPDRRKRS (126 aa). Residues 597 to 613 are compositionally biased toward basic and acidic residues; sequence LEEKEVVEVTESRDKPG. Residues 629-660 adopt a coiled-coil conformation; that stretch reads KELLALLKCVEAEIANYEACLKEEVEKRKKFK. The segment at 641–685 is interaction with YY1; the sequence is EIANYEACLKEEVEKRKKFKIDDQRRTHNYDEFICTFISMLAQEG. The 29-residue stretch at 669 to 697 folds into the ULD domain; that stretch reads NYDEFICTFISMLAQEGMLANLVEQNISV. Residues 698-700 are interaction with nucleosomal DNA forming a DNA clamp with ASXL1; it reads RRR. Residues 698–721 carry the Classical bipartite Nuclear localization signal (NLS) motif; sequence RRRQGVSIGRLHKQRKPDRRKRSR. Residues 702 to 728 are disordered; that stretch reads GVSIGRLHKQRKPDRRKRSRPYKAKRQ. A positively charged C-terminal extension (CTE) region spans residues 712 to 728; sequence RKPDRRKRSRPYKAKRQ. Residues 716-721 carry the Nuclear localization signal motif; the sequence is RRKRSR. The Non-classical PY-nuclear localization signal (PY-NLS) motif lies at 716-723; that stretch reads RRKRSRPY.

Belongs to the peptidase C12 family. BAP1 subfamily. As to quaternary structure, core component of the polycomb repressive deubiquitinase (PR-DUB) complex, at least composed of BAP1, one of ASXL1, ASXL2 or (probably) ASXL3, and one of MBD5 or MBD6. The PR-DUB core associates with a number of accessory proteins, including FOXK1, FOXK2, KDM1B, HCFC1, YY1 and OGT; KDM1B specifically associates with ASXL2 PR-DUB complexes. The BAP1 deubiquitinase activity is not required for PR-DUB assembly. Homodimerizes (via coiled-coil hinge-region between the UCH and ULD domains) to mediate assembly of 2 copies of the BAP1-ASXL heterodimer into a bisymmetric tetramer; dimerization enhances association with nucleosomes. The PR-DUB complex associates with nucleosomes to mediate deubiquitination of 'lys-120' of histone H2AK118ub1 substrates; the association requires the positively charged C-terminal tail of BAP1. Interacts (via ULD domain) with ASXL1 (via DEUBAD domain); the interaction is direct and forms a ubiquitin binding cleft. The interaction with ASXL1 stabilizes BAP1 but is not required for nucleosome binding. Associates (via C-terminus) with nucleosome and chromatosome complexes through direct interaction with DNA and the histone3/4 dimer; this association displaces the histone-2A C-terminal tail, extending and orienting the H2AK118ub1 substrate towards the BAP1 deubiquitinase active site. Also interacts (via arginine finger) directly with the histone H2A-H2B acidic patch; this interaction is not critical for nucleosome-chromatosome association but may play a role in orienting the H2AK118ub1 substrate towards the PR-DUB complex active site. Interacts with BRCA1 (via the RING finger). Interacts (via HBM-like motif) with HCFC1. Interacts (via a C-terminal region overlapping the ULD domain) with YY1; the interaction is direct and requires the interaction with HCFC1. Interacts (when phosphorylated at Thr-492) with FOXK1. Interacts (when phosphorylated at Thr-492) with FOXK2; leading to recruitment of the PR-DUB complex and repression of FOXK2 target genes. Interacts (via non-classical PY-NLS) with TNPO1/transportin-1 (via HEAT repeats 8-12); the interaction is direct, mediates BAP1 nuclear localization and disrupts BAP1 homodimerization. Interacts (via C-terminus) with KPNA1/importin alpha5 and KPNA2/importin alpha1; these interactions can contribute to BAP1 nuclear localization but are less important than the interaction with TNPO1/transportin-1. The interaction with TNPO1/transportin-1 disrupts homodimerization and blocks ubiquitination by UBE2O. In terms of processing, ubiquitinated: monoubiquitinated at multiple sites within its nuclear localization signal (NLS) BY UBE2O, leading to cytoplasmic retention. Able to mediate autodeubiquitination via intramolecular interactions to counteract cytoplasmic retention. Monoubiquitinated on at least 4 sites near or within its PY-NLS. In terms of tissue distribution, highly expressed in mammary glands, testis and ovary. Up-regulated in mammary glands during puberty, pregnancy, and as a result of parity.

Its subcellular location is the cytoplasm. The protein localises to the nucleus. The protein resides in the chromosome. The catalysed reaction is Thiol-dependent hydrolysis of ester, thioester, amide, peptide and isopeptide bonds formed by the C-terminal Gly of ubiquitin (a 76-residue protein attached to proteins as an intracellular targeting signal).. Functionally, deubiquitinating enzyme that plays a key role in chromatin by mediating deubiquitination of histone H2A and HCFC1. Catalytic component of the polycomb repressive deubiquitinase (PR-DUB) complex, a complex that specifically mediates deubiquitination of histone H2A monoubiquitinated at 'Lys-120' (H2AK119ub1). Does not deubiquitinate monoubiquitinated histone H2B. The PR-DUB complex is an epigenetic regulator of gene expression and acts as a transcriptional coactivator, affecting genes involved in development, cell communication, signaling, cell proliferation and cell viability. Antagonizes PRC1 mediated H2AK119ub1 monoubiquitination. As part of the PR-DUB complex, associates with chromatin enriched in histone marks H3K4me1, H3K4me3, and H3K27Ac, but not in H3K27me3. Acts as a regulator of cell growth by mediating deubiquitination of HCFC1 N-terminal and C-terminal chains, with some specificity toward 'Lys-48'-linked polyubiquitin chains compared to 'Lys-63'-linked polyubiquitin chains. Deubiquitination of HCFC1 does not lead to increase stability of HCFC1. Interferes with the BRCA1 and BARD1 heterodimer activity by inhibiting their ability to mediate ubiquitination and autoubiquitination. It however does not mediate deubiquitination of BRCA1 and BARD1. Able to mediate autodeubiquitination via intramolecular interactions to counteract monoubiquitination at the nuclear localization signal (NLS), thereby protecting it from cytoplasmic sequestration. Negatively regulates epithelial-mesenchymal transition (EMT) of trophoblast stem cells during placental development by regulating genes involved in epithelial cell integrity, cell adhesion and cytoskeletal organization. The polypeptide is Ubiquitin carboxyl-terminal hydrolase BAP1 (Bap1) (Mus musculus (Mouse)).